A 1265-amino-acid chain; its full sequence is 5-oxoprolinase (1265 aa).

Belongs to the oxoprolinase family. Homodimer.

The protein localises to the cytoplasm. Its subcellular location is the cytosol. The enzyme catalyses 5-oxo-L-proline + ATP + 2 H2O = L-glutamate + ADP + phosphate + H(+). Functionally, catalyzes the cleavage of 5-oxo-L-proline to form L-glutamate coupled to the hydrolysis of ATP to ADP and inorganic phosphate. The chain is 5-oxoprolinase (oplah) from Dictyostelium discoideum (Social amoeba).